The chain runs to 431 residues: Adenylosuccinate synthetase (431 aa).

GTP is bound by residues 13–19 and 41–43; these read GDEGKGK and GHT. The active-site Proton acceptor is D14. The Mg(2+) site is built by D14 and G41. Residues 14–17, 39–42, T130, R144, Q225, T240, and R304 contribute to the IMP site; these read DEGK and NAGH. H42 (proton donor) is an active-site residue. 300–306 is a binding site for substrate; that stretch reads ATTGRKR. GTP contacts are provided by residues R306, 332 to 334, and 415 to 417; these read KLD and STG.

The protein belongs to the adenylosuccinate synthetase family. In terms of assembly, homodimer. Mg(2+) is required as a cofactor.

It is found in the cytoplasm. The enzyme catalyses IMP + L-aspartate + GTP = N(6)-(1,2-dicarboxyethyl)-AMP + GDP + phosphate + 2 H(+). It functions in the pathway purine metabolism; AMP biosynthesis via de novo pathway; AMP from IMP: step 1/2. Its function is as follows. Plays an important role in the de novo pathway of purine nucleotide biosynthesis. Catalyzes the first committed step in the biosynthesis of AMP from IMP. The chain is Adenylosuccinate synthetase from Shewanella amazonensis (strain ATCC BAA-1098 / SB2B).